We begin with the raw amino-acid sequence, 723 residues long: Catalase-peroxidase (723 aa).

Residues 98-226 (WHSAGSYRVG…LAAVMMGLIY (129 aa)) constitute a cross-link (tryptophyl-tyrosyl-methioninium (Trp-Tyr) (with M-252)). Residue histidine 99 is the Proton acceptor of the active site. The segment at residues 226–252 (YVNPEGVDGNPDPLKTAKDMRVTFARM) is a cross-link (tryptophyl-tyrosyl-methioninium (Tyr-Met) (with W-98)). Residue histidine 267 coordinates heme b.

This sequence belongs to the peroxidase family. Peroxidase/catalase subfamily. Homodimer or homotetramer. Heme b serves as cofactor. Post-translationally, formation of the three residue Trp-Tyr-Met cross-link is important for the catalase, but not the peroxidase activity of the enzyme.

It catalyses the reaction H2O2 + AH2 = A + 2 H2O. The catalysed reaction is 2 H2O2 = O2 + 2 H2O. Bifunctional enzyme with both catalase and broad-spectrum peroxidase activity. The protein is Catalase-peroxidase of Vibrio vulnificus (strain YJ016).